A 149-amino-acid polypeptide reads, in one-letter code: Large ribosomal subunit protein bL9 (149 aa).

Belongs to the bacterial ribosomal protein bL9 family.

Functionally, binds to the 23S rRNA. This Vibrio cholerae serotype O1 (strain ATCC 39541 / Classical Ogawa 395 / O395) protein is Large ribosomal subunit protein bL9.